The primary structure comprises 263 residues: uncharacterized protein (263 aa).

17-41 contributes to the NAD(+) binding site; it reads GGGRGLGAAIALAFAQAGADVLIAS. Serine 147 contacts substrate. Catalysis depends on tyrosine 160, which acts as the Proton acceptor. An NAD(+)-binding site is contributed by lysine 164.

This sequence belongs to the short-chain dehydrogenases/reductases (SDR) family.

This is an uncharacterized protein from Mycobacterium tuberculosis (strain CDC 1551 / Oshkosh).